The primary structure comprises 346 residues: 3 beta-hydroxysteroid dehydrogenase/Delta 5--&gt;4-isomerase (346 aa).

The active-site Proton acceptor is Tyr147. Lys151 lines the NAD(+) pocket.

The protein belongs to the 3-beta-HSD family.

It catalyses the reaction a 3beta-hydroxy-Delta(5)-steroid + NAD(+) = a 3-oxo-Delta(5)-steroid + NADH + H(+). The catalysed reaction is a 3-oxo-Delta(5)-steroid = a 3-oxo-Delta(4)-steroid. It functions in the pathway lipid metabolism; steroid biosynthesis. Its function is as follows. Catalyzes the oxidative conversion of Delta(5)-ene-3-beta-hydroxy steroid, and the oxidative conversion of ketosteroids. The 3-beta-HSD enzymatic system plays a crucial role in the biosynthesis of all classes of hormonal steroids. During viral infection, steroid production contributes to virulence by inhibiting the host inflammatory response. This Homo sapiens (Human) protein is 3 beta-hydroxysteroid dehydrogenase/Delta 5--&gt;4-isomerase (OPG174).